The following is a 357-amino-acid chain: MLVLGIETTCDETAAAVVERHADGSALILSNIVRSQTGEHAPYGGVVPEIAARAHVDMLDGIIASAMKQSGVGFPRLSGVAAAAGPGLIGGVIVGLTTAKAIALVHRTPLIAVNHLEAHALTPRLTSALEFPYCLFLASGGHTQIVAVLGVGNYVRLGTTVDDAMGEAFDKVAKMLGLPYPGGPQVERAAADGDAKRFNFPRPMLGRPDANFSLSGLKTAVRNEAGRIDPLRPRDINDLCAGFQAAVLEATADRLGVGLELFRERFGTPRALVAAGGVAANQAIRGALEGVAARAQTMLIIPPPALCTDNGAMIAWAGAERLAAGLTDTLEAPPRARWLLDANAHAPAGFANTRAGF.

Residues His-115 and His-119 each coordinate Fe cation. Substrate contacts are provided by residues 137–141, Asp-170, Gly-183, and Asn-281; that span reads LASGG. Position 309 (Asp-309) interacts with Fe cation.

The protein belongs to the KAE1 / TsaD family. It depends on Fe(2+) as a cofactor.

The protein resides in the cytoplasm. The catalysed reaction is L-threonylcarbamoyladenylate + adenosine(37) in tRNA = N(6)-L-threonylcarbamoyladenosine(37) in tRNA + AMP + H(+). Required for the formation of a threonylcarbamoyl group on adenosine at position 37 (t(6)A37) in tRNAs that read codons beginning with adenine. Is involved in the transfer of the threonylcarbamoyl moiety of threonylcarbamoyl-AMP (TC-AMP) to the N6 group of A37, together with TsaE and TsaB. TsaD likely plays a direct catalytic role in this reaction. This chain is tRNA N6-adenosine threonylcarbamoyltransferase, found in Nitrobacter hamburgensis (strain DSM 10229 / NCIMB 13809 / X14).